The chain runs to 665 residues: Ribonuclease R 2 (665 aa).

Positions 202–528 constitute an RNB domain; it reads REDYRNEITY…LIIHRLLHLY (327 aa). The S1 motif domain maps to 579-662; that stretch reads GEVYTGTITG…RKGTVDFEQI (84 aa).

It belongs to the RNR ribonuclease family. RNase R subfamily.

Its subcellular location is the cytoplasm. The catalysed reaction is Exonucleolytic cleavage in the 3'- to 5'-direction to yield nucleoside 5'-phosphates.. 3'-5' exoribonuclease that releases 5'-nucleoside monophosphates and is involved in maturation of structured RNAs. The sequence is that of Ribonuclease R 2 from Lactococcus lactis subsp. lactis (strain IL1403) (Streptococcus lactis).